We begin with the raw amino-acid sequence, 147 residues long: MAAQRLGKRVLSKLQSPSRARGPGGSPSGLQKRHARVTVKYDRRELQRRLDVEKWIDGCLEELYRGRESDMPDEVNIDELLELDSEEERCRKIQGLLEACANPTEDFVQELLAKLRGLHKQPGFPQPSPSDDPSLSPRQDRAHTAPP.

The span at 1–11 (MAAQRLGKRVL) shows a compositional bias: basic residues. Positions 1–36 (MAAQRLGKRVLSKLQSPSRARGPGGSPSGLQKRHAR) are disordered. Ser26 carries the phosphoserine modification. Positions 35–120 (ARVTVKYDRR…LLAKLRGLHK (86 aa)) are inhibitory. The residue at position 38 (Thr38) is a Phosphothreonine; by PKC. The disordered stretch occupies residues 118 to 147 (LHKQPGFPQPSPSDDPSLSPRQDRAHTAPP). Residues Ser128, Ser134, and Ser136 each carry the phosphoserine modification. Residues 138–147 (RQDRAHTAPP) show a composition bias toward basic and acidic residues.

The protein belongs to the PP1 inhibitor family.

Its subcellular location is the cytoplasm. In terms of biological role, inhibitor of PPP1CA. Has over 1000-fold higher inhibitory activity when phosphorylated, creating a molecular switch for regulating the phosphorylation status of PPP1CA substrates and smooth muscle contraction. The polypeptide is Protein phosphatase 1 regulatory subunit 14A (Ppp1r14a) (Mus musculus (Mouse)).